The chain runs to 609 residues: Glutamine--fructose-6-phosphate aminotransferase [isomerizing] (609 aa).

Catalysis depends on Cys-2, which acts as the Nucleophile; for GATase activity. The region spanning 2-218 (CGIVGAIAQR…EGDIAEITRR (217 aa)) is the Glutamine amidotransferase type-2 domain. SIS domains follow at residues 286 to 426 (ADEL…LKGL) and 458 to 599 (LAED…VDQP). The active-site For Fru-6P isomerization activity is the Lys-604.

Homodimer.

The protein localises to the cytoplasm. The enzyme catalyses D-fructose 6-phosphate + L-glutamine = D-glucosamine 6-phosphate + L-glutamate. Functionally, catalyzes the first step in hexosamine metabolism, converting fructose-6P into glucosamine-6P using glutamine as a nitrogen source. The polypeptide is Glutamine--fructose-6-phosphate aminotransferase [isomerizing] (Shigella flexneri).